We begin with the raw amino-acid sequence, 520 residues long: Hydroxymethylglutaryl-CoA synthase, cytoplasmic (520 aa).

At serine 4 the chain carries Phosphoserine. Residue alanine 44 participates in (3S)-3-hydroxy-3-methylglutaryl-CoA binding. 44–46 (AGK) provides a ligand contact to CoA. Residue lysine 46 is modified to N6-acetyllysine. Residue glutamate 95 is the Proton donor/acceptor of the active site. Residues cysteine 129, asparagine 167, threonine 171, serine 221, and histidine 264 each coordinate (3S)-3-hydroxy-3-methylglutaryl-CoA. The Acyl-thioester intermediate role is filled by cysteine 129. A CoA-binding site is contributed by asparagine 167. Serine 221 serves as a coordination point for CoA. Residue histidine 264 is the Proton donor/acceptor of the active site. CoA is bound by residues lysine 269 and lysine 273. (3S)-3-hydroxy-3-methylglutaryl-CoA contacts are provided by lysine 273, asparagine 343, and serine 377. Lysine 273 bears the N6-acetyllysine mark. Threonine 476 is modified (phosphothreonine). Positions 492 to 520 (HIPSPAKKVPRLPATAAEPEAAVISNGEH) are disordered. Residues serine 495 and serine 516 each carry the phosphoserine modification.

It belongs to the thiolase-like superfamily. HMG-CoA synthase family. In terms of assembly, homodimer.

It localises to the cytoplasm. The catalysed reaction is acetoacetyl-CoA + acetyl-CoA + H2O = (3S)-3-hydroxy-3-methylglutaryl-CoA + CoA + H(+). The protein operates within metabolic intermediate biosynthesis; (R)-mevalonate biosynthesis; (R)-mevalonate from acetyl-CoA: step 2/3. Functionally, catalyzes the condensation of acetyl-CoA with acetoacetyl-CoA to form HMG-CoA, which is converted by HMG-CoA reductase (HMGCR) into mevalonate, a precursor for cholesterol synthesis. The chain is Hydroxymethylglutaryl-CoA synthase, cytoplasmic from Pongo abelii (Sumatran orangutan).